The sequence spans 192 residues: GTP cyclohydrolase-2 (192 aa).

50–54 (RLHSE) is a binding site for GTP. 3 residues coordinate Zn(2+): Cys-55, Cys-66, and Cys-68. GTP contacts are provided by residues 92-94 (EGR) and Thr-114. The Proton acceptor role is filled by Asp-126. Arg-128 serves as the catalytic Nucleophile. Residues Thr-149 and Lys-154 each contribute to the GTP site.

This sequence belongs to the GTP cyclohydrolase II family. Zn(2+) is required as a cofactor.

It carries out the reaction GTP + 4 H2O = 2,5-diamino-6-hydroxy-4-(5-phosphoribosylamino)-pyrimidine + formate + 2 phosphate + 3 H(+). The protein operates within cofactor biosynthesis; riboflavin biosynthesis; 5-amino-6-(D-ribitylamino)uracil from GTP: step 1/4. Its function is as follows. Catalyzes the conversion of GTP to 2,5-diamino-6-ribosylamino-4(3H)-pyrimidinone 5'-phosphate (DARP), formate and pyrophosphate. This Helicobacter pylori (strain J99 / ATCC 700824) (Campylobacter pylori J99) protein is GTP cyclohydrolase-2.